A 110-amino-acid polypeptide reads, in one-letter code: Thiosulfate sulfurtransferase GlpE (110 aa).

One can recognise a Rhodanese domain in the interval 17–105 (HQGKAVLVDI…WHRHFPAEVE (89 aa)). The active-site Cysteine persulfide intermediate is Cys-65.

The protein belongs to the GlpE family.

Its subcellular location is the cytoplasm. The enzyme catalyses thiosulfate + hydrogen cyanide = thiocyanate + sulfite + 2 H(+). The catalysed reaction is thiosulfate + [thioredoxin]-dithiol = [thioredoxin]-disulfide + hydrogen sulfide + sulfite + 2 H(+). In terms of biological role, transferase that catalyzes the transfer of sulfur from thiosulfate to thiophilic acceptors such as cyanide or dithiols. May function in a CysM-independent thiosulfate assimilation pathway by catalyzing the conversion of thiosulfate to sulfite, which can then be used for L-cysteine biosynthesis. The chain is Thiosulfate sulfurtransferase GlpE from Enterobacter sp. (strain 638).